A 465-amino-acid polypeptide reads, in one-letter code: UDP-N-acetylmuramoylalanine--D-glutamate ligase (465 aa).

ATP is bound at residue 112 to 118; it reads GTDGKTT.

Belongs to the MurCDEF family.

It is found in the cytoplasm. The enzyme catalyses UDP-N-acetyl-alpha-D-muramoyl-L-alanine + D-glutamate + ATP = UDP-N-acetyl-alpha-D-muramoyl-L-alanyl-D-glutamate + ADP + phosphate + H(+). Its pathway is cell wall biogenesis; peptidoglycan biosynthesis. In terms of biological role, cell wall formation. Catalyzes the addition of glutamate to the nucleotide precursor UDP-N-acetylmuramoyl-L-alanine (UMA). This is UDP-N-acetylmuramoylalanine--D-glutamate ligase from Chlorobium limicola (strain DSM 245 / NBRC 103803 / 6330).